A 60-amino-acid chain; its full sequence is LKCHKLVPPFWKTCPEGKNLCYKMYMVATPMIPVKRGCIDVCPKNSALVKYMCCNTNKCN.

4 disulfides stabilise this stretch: cysteine 3–cysteine 21, cysteine 14–cysteine 38, cysteine 42–cysteine 53, and cysteine 54–cysteine 59.

It belongs to the three-finger toxin family. Short-chain subfamily. Type IA cytotoxin sub-subfamily. Monomer in solution; Homodimer and oligomer in the presence of negatively charged lipids forming a pore with a size ranging between 20 and 30 Angstroms. In terms of tissue distribution, expressed by the venom gland.

It is found in the secreted. It localises to the target cell membrane. Shows cytolytic activity on many different cells by forming pore in lipid membranes. In vivo, increases heart rate or kills the animal by cardiac arrest. In addition, it binds to heparin with high affinity, interacts with Kv channel-interacting protein 1 (KCNIP1) in a calcium-independent manner, and binds to integrin alpha-V/beta-3 (ITGAV/ITGB3) with moderate affinity. This Naja annulifera (Banded Egyptian cobra) protein is Cytotoxin 5.